The following is a 109-amino-acid chain: Thiosulfate sulfurtransferase GlpE (109 aa).

A Rhodanese domain is found at 17–105; the sequence is KEGKTALVDI…WARSYPQDIT (89 aa). The active-site Cysteine persulfide intermediate is Cys65.

Belongs to the GlpE family.

Its subcellular location is the cytoplasm. The enzyme catalyses thiosulfate + hydrogen cyanide = thiocyanate + sulfite + 2 H(+). The catalysed reaction is thiosulfate + [thioredoxin]-dithiol = [thioredoxin]-disulfide + hydrogen sulfide + sulfite + 2 H(+). Its function is as follows. Transferase that catalyzes the transfer of sulfur from thiosulfate to thiophilic acceptors such as cyanide or dithiols. May function in a CysM-independent thiosulfate assimilation pathway by catalyzing the conversion of thiosulfate to sulfite, which can then be used for L-cysteine biosynthesis. In Yersinia pestis bv. Antiqua (strain Antiqua), this protein is Thiosulfate sulfurtransferase GlpE.